A 436-amino-acid polypeptide reads, in one-letter code: UPF0597 protein YhaM (436 aa).

It belongs to the UPF0597 family.

This is UPF0597 protein YhaM from Salmonella dublin (strain CT_02021853).